A 356-amino-acid chain; its full sequence is Phosphoribosyl pyrophosphate synthase-associated protein 1 (356 aa).

Met1 is subject to N-acetylmethionine. Asn2 is subject to N-acetylproline. A phosphoserine mark is found at Ser177 and Ser215.

It belongs to the ribose-phosphate pyrophosphokinase family. Binds to PRPS1 and PRPS2. As to expression, ubiquitous.

Functionally, seems to play a negative regulatory role in 5-phosphoribose 1-diphosphate synthesis. This Homo sapiens (Human) protein is Phosphoribosyl pyrophosphate synthase-associated protein 1 (PRPSAP1).